The following is a 212-amino-acid chain: Peroxisomal membrane protein 4 (212 aa).

2 helical membrane passes run 97–117 (GETH…LLFG) and 153–173 (WDPF…LFEY). N-linked (GlcNAc...) asparagine glycosylation is present at asparagine 206.

Belongs to the peroxisomal membrane protein PXMP2/4 family. Interacts with PEX19.

The protein resides in the peroxisome membrane. The chain is Peroxisomal membrane protein 4 (Pxmp4) from Mus musculus (Mouse).